The sequence spans 312 residues: Taste receptor type 2 member 62 (312 aa).

Residues 1–4 (MPSL) lie on the Extracellular side of the membrane. Residues 5–27 (PTLIFIAIFCLESLAAMLQNGFL) traverse the membrane as a helical segment. Over 28–39 (VTMLGREWVRCR) the chain is Cytoplasmic. Residues 40 to 62 (MLSTSDMIVACLAASRFCLHGVA) form a helical membrane-spanning segment. At 63–81 (MANNLLASLDFSRAVPYMN) the chain is on the extracellular side. A helical membrane pass occupies residues 82–104 (IFWDLFNALTLWFTALLAAFYCV). Residues 105-127 (KISSFSHPTFAWLKWRISRLVPK) lie on the Cytoplasmic side of the membrane. Residues 128 to 150 (LIKGSLIICGLEVISSATGNILF) form a helical membrane-spanning segment. Residues 151–182 (GQRKVSLSSYRNETLVYRVQASFQLYFFLYDG) are Extracellular-facing. A glycan (N-linked (GlcNAc...) asparagine) is linked at N162. A helical transmembrane segment spans residues 183–205 (FVWSIPFLLFLVSTVLLIVSLCW). The Cytoplasmic segment spans residues 206–231 (QLGQMRDLRPGPCDPSTQAYTMALKS). A helical membrane pass occupies residues 232 to 254 (LTFSLIFCTLYFLSLFASALKII). Residues 255-258 (NFQN) lie on the Extracellular side of the membrane. Residues 259 to 281 (HWHWAWEVLIYANICLHSTVLVL) traverse the membrane as a helical segment. Over 282 to 312 (RSPKLKKGLKTWPQLQCPCDAGSQGFGRCWP) the chain is Cytoplasmic.

Belongs to the G-protein coupled receptor T2R family.

The protein resides in the membrane. In terms of biological role, receptor that may play a role in the perception of bitterness and is gustducin-linked. May play a role in sensing the chemical composition of the gastrointestinal content. The activity of this receptor may stimulate alpha gustducin, mediate PLC-beta-2 activation and lead to the gating of TRPM5. This chain is Taste receptor type 2 member 62 (TAS2R62), found in Pan paniscus (Pygmy chimpanzee).